Consider the following 147-residue polypeptide: Protein SPMIP3 (147 aa).

The protein is Protein SPMIP3 of Homo sapiens (Human).